A 130-amino-acid chain; its full sequence is Ornithine decarboxylase antizyme (130 aa).

Basic and acidic residues predominate over residues S1–A14. The disordered stretch occupies residues S1–S56. Residues L17–D27 are compositionally biased toward polar residues. Residues S32–C51 show a composition bias toward low complexity.

The protein belongs to the ODC antizyme family. As to quaternary structure, interacts with ODC1 and thereby sterically blocks ODC homodimerization.

Functionally, ornithine decarboxylase (ODC) antizyme protein that negatively regulates ODC activity and intracellular polyamine biosynthesis and uptake in response to increased intracellular polyamine levels. Binds to ODC monomers, inhibiting the assembly of the functional ODC homodimer, and targets the monomers for ubiquitin-independent proteolytic destruction by the 26S proteasome. In Drosophila virilis (Fruit fly), this protein is Ornithine decarboxylase antizyme (Oda).